We begin with the raw amino-acid sequence, 151 residues long: Arginine repressor (151 aa).

Belongs to the ArgR family.

It localises to the cytoplasm. Its pathway is amino-acid biosynthesis; L-arginine biosynthesis [regulation]. In terms of biological role, regulates arginine biosynthesis genes. This Heliobacterium modesticaldum (strain ATCC 51547 / Ice1) protein is Arginine repressor.